The chain runs to 290 residues: Bifunctional protein FolD 1 (290 aa).

Residues 172–174 (GAS) and isoleucine 238 each bind NADP(+).

This sequence belongs to the tetrahydrofolate dehydrogenase/cyclohydrolase family. Homodimer.

The enzyme catalyses (6R)-5,10-methylene-5,6,7,8-tetrahydrofolate + NADP(+) = (6R)-5,10-methenyltetrahydrofolate + NADPH. It carries out the reaction (6R)-5,10-methenyltetrahydrofolate + H2O = (6R)-10-formyltetrahydrofolate + H(+). It participates in one-carbon metabolism; tetrahydrofolate interconversion. Its function is as follows. Catalyzes the oxidation of 5,10-methylenetetrahydrofolate to 5,10-methenyltetrahydrofolate and then the hydrolysis of 5,10-methenyltetrahydrofolate to 10-formyltetrahydrofolate. This is Bifunctional protein FolD 1 from Pseudomonas putida (strain GB-1).